A 224-amino-acid polypeptide reads, in one-letter code: tRNA (guanine-N(7)-)-methyltransferase (224 aa).

The S-adenosyl-L-methionine site is built by glutamate 54, glutamate 79, and aspartate 129. Aspartate 129 is an active-site residue. Substrate contacts are provided by lysine 133 and aspartate 165.

It belongs to the class I-like SAM-binding methyltransferase superfamily. TrmB family.

The enzyme catalyses guanosine(46) in tRNA + S-adenosyl-L-methionine = N(7)-methylguanosine(46) in tRNA + S-adenosyl-L-homocysteine. The protein operates within tRNA modification; N(7)-methylguanine-tRNA biosynthesis. In terms of biological role, catalyzes the formation of N(7)-methylguanine at position 46 (m7G46) in tRNA. This is tRNA (guanine-N(7)-)-methyltransferase from Chlamydia pneumoniae (Chlamydophila pneumoniae).